The following is a 154-amino-acid chain: Superoxide dismutase [Cu-Zn] (154 aa).

His47, His49, and His64 together coordinate Cu cation. Cys58 and Cys147 are oxidised to a cystine. His64, His72, His81, and Asp84 together coordinate Zn(2+). His121 serves as a coordination point for Cu cation. Position 144 (Arg144) interacts with substrate.

It belongs to the Cu-Zn superoxide dismutase family. Homodimer. Cu cation serves as cofactor. Requires Zn(2+) as cofactor.

Its subcellular location is the cytoplasm. The protein localises to the mitochondrion. The protein resides in the cell membrane. The catalysed reaction is 2 superoxide + 2 H(+) = H2O2 + O2. Destroys radicals which are normally produced within the cells and which are toxic to biological systems. Destroys radicals produced by host defense mechanisms. The polypeptide is Superoxide dismutase [Cu-Zn] (Cryptococcus neoformans var. grubii serotype A (strain H99 / ATCC 208821 / CBS 10515 / FGSC 9487) (Filobasidiella neoformans var. grubii)).